Consider the following 280-residue polypeptide: Succinate dehydrogenase [ubiquinone] iron-sulfur subunit, mitochondrial (280 aa).

The N-terminal 28 residues, 1–28 (MAAVVAVSLKRWFPATTLGGACLQACRG), are a transit peptide targeting the mitochondrion. The region spanning 40–131 (KKFAIYRWDP…DKVSKIYPLP (92 aa)) is the 2Fe-2S ferredoxin-type domain. 2 positions are modified to N6-acetyllysine: lysine 51 and lysine 55. 4 residues coordinate [2Fe-2S] cluster: cysteine 93, cysteine 98, cysteine 101, and cysteine 113. The tract at residues 146 to 218 (FYAQYKSIEP…PAVLMQAYRW (73 aa)) is interaction with SDHAF1. The region spanning 176 to 206 (EREKLDGLYECILCACCSTSCPSYWWNGDKY) is the 4Fe-4S ferredoxin-type domain. Residues cysteine 186, cysteine 189, and cysteine 192 each coordinate [4Fe-4S] cluster. Cysteine 196 contacts [3Fe-4S] cluster. Tryptophan 201 lines the a ubiquinone pocket. [3Fe-4S] cluster-binding residues include cysteine 243 and cysteine 249. Position 253 (cysteine 253) interacts with [4Fe-4S] cluster.

This sequence belongs to the succinate dehydrogenase/fumarate reductase iron-sulfur protein family. Component of complex II composed of four subunits: the flavoprotein (FP) SDHA, iron-sulfur protein (IP) SDHB, and a cytochrome b560 composed of SDHC and SDHD. Interacts with SDHAF1; the interaction is required for iron-sulfur cluster incorporation into SDHB. [2Fe-2S] cluster is required as a cofactor. [3Fe-4S] cluster serves as cofactor. The cofactor is [4Fe-4S] cluster.

The protein resides in the mitochondrion inner membrane. It catalyses the reaction a quinone + succinate = fumarate + a quinol. It carries out the reaction (R)-malate + a quinone = enol-oxaloacetate + a quinol. The catalysed reaction is (S)-malate + a quinone = enol-oxaloacetate + a quinol. It participates in carbohydrate metabolism; tricarboxylic acid cycle; fumarate from succinate (eukaryal route): step 1/1. With respect to regulation, enol-oxaloacetate inhibits the succinate dehydrogenase activity. Iron-sulfur protein (IP) subunit of the succinate dehydrogenase complex (mitochondrial respiratory chain complex II), responsible for transferring electrons from succinate to ubiquinone (coenzyme Q). SDH also oxidizes malate to the non-canonical enol form of oxaloacetate, enol-oxaloacetate. Enol-oxaloacetate, which is a potent inhibitor of the succinate dehydrogenase activity, is further isomerized into keto-oxaloacetate. This chain is Succinate dehydrogenase [ubiquinone] iron-sulfur subunit, mitochondrial (SDHB), found in Sus scrofa (Pig).